We begin with the raw amino-acid sequence, 152 residues long: Large ribosomal subunit protein bL9 (152 aa).

It belongs to the bacterial ribosomal protein bL9 family.

Its function is as follows. Binds to the 23S rRNA. The chain is Large ribosomal subunit protein bL9 from Nostoc sp. (strain PCC 7120 / SAG 25.82 / UTEX 2576).